The primary structure comprises 342 residues: Subtilisin-like serine protease Rho m 2.0101 (342 aa).

Positions 1-30 are cleaved as a propeptide — removed in mature form; the sequence is TMELLEDLIEQVRQLPMVNFIEKNSLVHAN. The 30-residue stretch at 1–30 folds into the Inhibitor I9 domain; it reads TMELLEDLIEQVRQLPMVNFIEKNSLVHAN. Positions 39–342 constitute a Peptidase S8 domain; sequence PWGLARISHR…GQNLTKFWGH (304 aa). Catalysis depends on charge relay system residues Asp75 and His107. Residues Asn137 and Asn171 are each glycosylated (N-linked (GlcNAc...) asparagine). The active-site Charge relay system is Ser267. Asn335 carries N-linked (GlcNAc...) asparagine glycosylation.

It belongs to the peptidase S8 family.

Serine protease. The sequence is that of Subtilisin-like serine protease Rho m 2.0101 from Rhodotorula mucilaginosa (Yeast).